We begin with the raw amino-acid sequence, 63 residues long: Small ribosomal subunit protein bS21 (63 aa).

It belongs to the bacterial ribosomal protein bS21 family.

The polypeptide is Small ribosomal subunit protein bS21 (Azobacteroides pseudotrichonymphae genomovar. CFP2).